Reading from the N-terminus, the 602-residue chain is 4-hydroxy-3-methylbut-2-en-1-yl diphosphate synthase (flavodoxin) (602 aa).

C508, C511, C543, and E550 together coordinate [4Fe-4S] cluster.

This sequence belongs to the IspG family. The cofactor is [4Fe-4S] cluster.

The enzyme catalyses (2E)-4-hydroxy-3-methylbut-2-enyl diphosphate + oxidized [flavodoxin] + H2O + 2 H(+) = 2-C-methyl-D-erythritol 2,4-cyclic diphosphate + reduced [flavodoxin]. Its pathway is isoprenoid biosynthesis; isopentenyl diphosphate biosynthesis via DXP pathway; isopentenyl diphosphate from 1-deoxy-D-xylulose 5-phosphate: step 5/6. In terms of biological role, converts 2C-methyl-D-erythritol 2,4-cyclodiphosphate (ME-2,4cPP) into 1-hydroxy-2-methyl-2-(E)-butenyl 4-diphosphate. The polypeptide is 4-hydroxy-3-methylbut-2-en-1-yl diphosphate synthase (flavodoxin) (Chlamydia trachomatis serovar L2b (strain UCH-1/proctitis)).